Reading from the N-terminus, the 437-residue chain is Chloride intracellular channel protein 5 (437 aa).

Over residues 1–14 (MNDENYSTTIYNRV) the composition is skewed to polar residues. Residues 1–197 (MNDENYSTTI…VSEGNESASA (197 aa)) form a disordered region. The span at 34-45 (DEVHEDVRREDN) shows a compositional bias: basic and acidic residues. A run of 4 repeats spans residues 118–125 (QSDSEEPQ), 126–133 (ASDPEEPQ), 134–141 (ASDPEEPQ), and 142–149 (GPDPEEPQ). The segment at 118 to 149 (QSDSEEPQASDPEEPQASDPEEPQGPDPEEPQ) is 4 X 8 AA tandem repeats of [AGQ]-[SP]-D-[PS]-E-E-P-Q. The segment covering 121–157 (SEEPQASDPEEPQASDPEEPQGPDPEEPQENGNEMEA) has biased composition (acidic residues). Polar residues predominate over residues 161–184 (SPSSFTIQNSRAFSTREISPTSYS). Positions 217-220 (CPFS) match the G-site motif. Residues 219–239 (FSQRLFMILWLKGVVFNVTTV) traverse the membrane as a helical segment. The 165-residue stretch at 263 to 427 (NGDVKTDVNK…AADSEIELAY (165 aa)) folds into the GST C-terminal domain.

It belongs to the chloride channel CLIC family. Component of a multimeric complex consisting of several cytoskeletal proteins, including actin, ezrin, alpha-actinin, gelsolin, and IQGAP1. Interacts with AKAP9. Interacts with TPRN. TPRN, CLIC5 and PTPQR form concentric rings at the base of stereocilia and may form a complex. Interacts with EZR, MYO6 and RDX; the proteins may work together as a complex to stabilize linkages between the plasma membrane and subjacent actin cytoskeleton at the stereocilium base. Post-translationally, phosphorylated. As to expression, expressed in most tissues. Higher levels found in kidney, heart, skeletal muscle, T84 and PANC-1 cells.

Its subcellular location is the golgi apparatus. The protein resides in the cytoplasm. The protein localises to the cytoskeleton. It is found in the microtubule organizing center. It localises to the centrosome. Its subcellular location is the cell cortex. The protein resides in the membrane. The protein localises to the apical cell membrane. It is found in the mitochondrion. It localises to the cell projection. Its subcellular location is the stereocilium. It catalyses the reaction Na(+)(in) = Na(+)(out). It carries out the reaction K(+)(in) = K(+)(out). The catalysed reaction is chloride(in) = chloride(out). Inhibited by F-actin. In terms of biological role, in the soluble state, catalyzes glutaredoxin-like thiol disulfide exchange reactions with reduced glutathione as electron donor. Can insert into membranes and form non-selective ion channels almost equally permeable to Na(+), K(+) and Cl(-). Required for normal hearing. It is necessary for the formation of stereocilia in the inner ear and normal development of the organ of Corti. May play a role in the regulation of transepithelial ion absorption and secretion. Is required for the development and/or maintenance of the proper glomerular endothelial cell and podocyte architecture. Plays a role in formation of the lens suture in the eye, which is important for normal optical properties of the lens. This is Chloride intracellular channel protein 5 (CLIC5) from Bos taurus (Bovine).